A 455-amino-acid chain; its full sequence is Argininosuccinate lyase (455 aa).

It belongs to the lyase 1 family. Argininosuccinate lyase subfamily.

The protein resides in the cytoplasm. It carries out the reaction 2-(N(omega)-L-arginino)succinate = fumarate + L-arginine. It functions in the pathway amino-acid biosynthesis; L-arginine biosynthesis; L-arginine from L-ornithine and carbamoyl phosphate: step 3/3. This chain is Argininosuccinate lyase, found in Shewanella baltica (strain OS223).